The sequence spans 122 residues: Lysozyme (122 aa).

The I-type lysozyme domain maps to 3–118; that stretch reads GGIVSQRCLS…WNRLQKISGC (116 aa). Disulfide bonds link Cys10-Cys86, Cys13-Cys118, Cys15-Cys21, Cys26-Cys35, Cys48-Cys68, Cys58-Cys64, and Cys82-Cys100. Glu18 serves as the catalytic Proton donor. Asp29 (nucleophile) is an active-site residue. Residue 41–47 participates in substrate binding; the sequence is KEAYWID. Substrate-binding positions include Tyr72, His93, 93–95, and Lys102; that span reads HNG.

Belongs to the glycosyl hydrolase 22 family. Type-I lysozyme subfamily. Monomer.

Its subcellular location is the secreted. The enzyme catalyses Hydrolysis of (1-&gt;4)-beta-linkages between N-acetylmuramic acid and N-acetyl-D-glucosamine residues in a peptidoglycan and between N-acetyl-D-glucosamine residues in chitodextrins.. Functionally, has bacteriolytic activity against Gram-positive bacteria M.luteus. Also has chitinase activity. The sequence is that of Lysozyme from Meretrix lusoria (Hard clam).